The sequence spans 1131 residues: Homeobox-DDT domain protein RLT3 (1131 aa).

Residues 2-56 constitute a DNA-binding region (homeobox; TALE-type); the sequence is KRKSPLQVQALEGFYLEQMYPTPKEMEDLGKSLGLTLKEVRGWFKRRRSRGKGVK. Over residues 239-251 the composition is skewed to basic residues; sequence LQKRSTEKKRRSI. The segment at 239 to 264 is disordered; sequence LQKRSTEKKRRSIHREAELNKDETQR. Positions 252 to 264 are enriched in basic and acidic residues; it reads HREAELNKDETQR. Residues 365–424 form the DDT domain; sequence PESVKKLFKVVHFLYTYSVTLDIGPFTLDEFTRAFHDKDSLLLGKIHLSLLKLLLLDVET. The interval 579–609 is disordered; it reads EDPDKSQSDSDDSGSVDDESDDCSISSGDEI. Residues 587–600 are compositionally biased toward acidic residues; that stretch reads DSDDSGSVDDESDD.

It localises to the nucleus. In terms of biological role, transcriptional regulator required for the maintenance of the plant vegetative phase. May prevent the early activation of the vegetative-to-reproductive transition by regulating key genes that contribute to flower timing. The polypeptide is Homeobox-DDT domain protein RLT3 (Arabidopsis thaliana (Mouse-ear cress)).